A 403-amino-acid polypeptide reads, in one-letter code: Tryptophan synthase beta chain (403 aa).

Residue Lys-88 is modified to N6-(pyridoxal phosphate)lysine.

It belongs to the TrpB family. In terms of assembly, tetramer of two alpha and two beta chains. Requires pyridoxal 5'-phosphate as cofactor.

It carries out the reaction (1S,2R)-1-C-(indol-3-yl)glycerol 3-phosphate + L-serine = D-glyceraldehyde 3-phosphate + L-tryptophan + H2O. It participates in amino-acid biosynthesis; L-tryptophan biosynthesis; L-tryptophan from chorismate: step 5/5. The beta subunit is responsible for the synthesis of L-tryptophan from indole and L-serine. This chain is Tryptophan synthase beta chain, found in Shewanella frigidimarina (strain NCIMB 400).